The chain runs to 346 residues: MNQNKNNNNKNPKINLLIIGCGCIGLSTGIIALKSGNYKSVSIWAKDLPPNTTSNKAAALWYPFLCNPLDLVGKWSAETMQYYKDHIINDPKSGTITKKVNEIFRRPHPEDPEWKPYIKSFRRARKDELPDGYVDGYAIDDGFVMDTDMYMDYLVDQFKSLGGIIEQRHLVDIREAFVDHDVVVNCTGLGSRELFNDRTIYPGRGQIIVIKNSTDRSIMDEEDHIAYVIPRLTNTVLGGTNQEHDYNTNPTKKDTEEILKRVAMISPRFAKNRIEIQGVKVGLRPARHEIRLENEFFEGGSKLVVHNYGHGGSGFTVSWGCAIEAIKLVDQGLPKLLHFNKLISKL.

The FAD site is built by glycine 22, isoleucine 24, threonine 52, threonine 53, serine 54, alanine 58, alanine 59, leucine 60, and threonine 187. 2 residues coordinate D-proline: tyrosine 227 and arginine 284. Residues tyrosine 227 and arginine 284 each contribute to the D-serine site. 5 residues coordinate FAD: arginine 284, glycine 311, glycine 312, glycine 314, and threonine 316. D-dopa is bound at residue arginine 284. A D-proline-binding site is contributed by glycine 312. Glycine 312 provides a ligand contact to D-serine. Residue glycine 312 participates in D-dopa binding. The Microbody targeting signal signature appears at 344 to 346 (SKL).

Belongs to the DAMOX/DASOX family. FAD serves as cofactor.

Its subcellular location is the peroxisome matrix. It catalyses the reaction a D-alpha-amino acid + O2 + H2O = a 2-oxocarboxylate + H2O2 + NH4(+). The catalysed reaction is D-serine + O2 + H2O = 3-hydroxypyruvate + H2O2 + NH4(+). It carries out the reaction D-phenylalanine + O2 + H2O = 3-phenylpyruvate + H2O2 + NH4(+). The enzyme catalyses D-alanine + O2 + H2O = pyruvate + H2O2 + NH4(+). It catalyses the reaction D-arginine + O2 + H2O = 5-guanidino-2-oxopentanoate + H2O2 + NH4(+). The catalysed reaction is D-methionine + O2 + H2O = 4-methylsulfanyl-2-oxobutanoate + H2O2 + NH4(+). It carries out the reaction D-ornithine + O2 + H2O = 5-amino-2-oxopentanoate + H2O2 + NH4(+). The enzyme catalyses D-leucine + O2 + H2O = 4-methyl-2-oxopentanoate + H2O2 + NH4(+). It catalyses the reaction D-lysine + O2 + H2O = 6-amino-2-oxohexanoate + H2O2 + NH4(+). The catalysed reaction is D-proline + O2 = 1-pyrroline-2-carboxylate + H2O2. It carries out the reaction D-valine + O2 + H2O = 3-methyl-2-oxobutanoate + H2O2 + NH4(+). The enzyme catalyses D-histidine + O2 + H2O = 3-(imidazol-5-yl)pyruvate + H2O2 + NH4(+). Catalyzes the oxidative deamination of D-amino acids with broad substrate specificity. Has low in vitro and no in vivo activity on D-serine; primary D-serine degradation is performed by the D-serine dehydratase dsd. The polypeptide is D-amino-acid oxidase (ddo-1) (Dictyostelium discoideum (Social amoeba)).